A 70-amino-acid polypeptide reads, in one-letter code: Protein FlmC (70 aa).

Component of a type I toxin-antitoxin (TA) system. Either this protein or sequences upstream of it are required for translation of downstream flmA; this could be translationally coupled to flmA. The polypeptide is Protein FlmC (flmC) (Escherichia coli (strain K12)).